The sequence spans 94 residues: Enhancer of yellow 2 transcription factor (94 aa).

It belongs to the ENY2 family. In terms of assembly, component of the nuclear pore complex (NPC)-associated AMEX complex (anchoring and mRNA export complex), composed of at least e(y)2 and xmas-2. Component of the SAGA transcription coactivator-HAT complexes, at least composed of Ada2b, e(y)2, Pcaf/Gcn5, Taf10 and Nipped-A/Trrap. Within the SAGA complex, e(y)2, Sgf11, and not/nonstop form an additional subcomplex of SAGA called the DUB module (deubiquitination module). Component of the THO complex, composed of at least e(y)2, HPR1, THO2, THOC5, THOC6 and THOC7. Interacts with e(y)1. Interacts with su(Hw) (via zinc fingers). Interacts with xmas-2; required for localization to the nuclear periphery. Interacts with the nuclear pore complex (NPC).

The protein localises to the nucleus. It is found in the nucleoplasm. It localises to the cytoplasm. Involved in mRNA export coupled transcription activation by association with both the AMEX and the SAGA complexes. The SAGA complex is a multiprotein complex that activates transcription by remodeling chromatin and mediating histone acetylation and deubiquitination. Within the SAGA complex, participates in a subcomplex that specifically deubiquitinates histone H2B. The SAGA complex is recruited to specific gene promoters by activators, where it is required for transcription. Required for nuclear receptor-mediated transactivation. Involved in transcription elongation by recruiting the THO complex onto nascent mRNA. The AMEX complex functions in docking export-competent ribonucleoprotein particles (mRNPs) to the nuclear entrance of the nuclear pore complex (nuclear basket). AMEX participates in mRNA export and accurate chromatin positioning in the nucleus by tethering genes to the nuclear periphery. The protein is Enhancer of yellow 2 transcription factor of Drosophila grimshawi (Hawaiian fruit fly).